The following is a 1010-amino-acid chain: Regulator of telomere elongation helicase 1 homolog (1010 aa).

The Helicase ATP-binding domain maps to 7–333 (NGITVNFPFE…KEMLLQLEKT (327 aa)). An ATP-binding site is contributed by 42 to 49 (SPTGTGKT). [4Fe-4S] cluster contacts are provided by cysteine 157, cysteine 175, cysteine 184, and cysteine 220. Positions 263-266 (DEAH) match the DEAH box motif. Positions 912–931 (TSDDEDPGRTGDDPTRQAPE) are disordered. Basic and acidic residues predominate over residues 918-931 (PGRTGDDPTRQAPE).

It belongs to the helicase family. RAD3/XPD subfamily.

It localises to the nucleus. It carries out the reaction ATP + H2O = ADP + phosphate + H(+). In terms of biological role, a probable ATP-dependent DNA helicase implicated in DNA repair and the maintenance of genomic stability. Acts as an anti-recombinase to counteract toxic recombination and limit crossover during meiosis. Regulates meiotic recombination and crossover homeostasis by physically dissociating strand invasion events and thereby promotes noncrossover repair by meiotic synthesis dependent strand annealing (SDSA) as well as disassembly of D loop recombination intermediates. The polypeptide is Regulator of telomere elongation helicase 1 homolog (Aedes aegypti (Yellowfever mosquito)).